The following is a 164-amino-acid chain: UPF0303 protein Smed_2872 (164 aa).

The protein belongs to the UPF0303 family.

This chain is UPF0303 protein Smed_2872, found in Sinorhizobium medicae (strain WSM419) (Ensifer medicae).